We begin with the raw amino-acid sequence, 354 residues long: NADH-quinone oxidoreductase subunit H (354 aa).

A run of 8 helical transmembrane segments spans residues 23–43 (LVRA…LILW), 91–111 (YIIA…VIPF), 124–144 (LLYV…AGWA), 162–182 (ISYE…TGSL), 203–223 (ILSW…ISGV), 250–270 (GMAF…ISAL), 291–311 (IPGF…FIWL), and 330–350 (IFIP…VSPW).

It belongs to the complex I subunit 1 family. NDH-1 is composed of 14 different subunits. Subunits NuoA, H, J, K, L, M, N constitute the membrane sector of the complex.

Its subcellular location is the cell inner membrane. The enzyme catalyses a quinone + NADH + 5 H(+)(in) = a quinol + NAD(+) + 4 H(+)(out). Its function is as follows. NDH-1 shuttles electrons from NADH, via FMN and iron-sulfur (Fe-S) centers, to quinones in the respiratory chain. The immediate electron acceptor for the enzyme in this species is believed to be ubiquinone. Couples the redox reaction to proton translocation (for every two electrons transferred, four hydrogen ions are translocated across the cytoplasmic membrane), and thus conserves the redox energy in a proton gradient. This subunit may bind ubiquinone. This Ralstonia pickettii (strain 12J) protein is NADH-quinone oxidoreductase subunit H.